Reading from the N-terminus, the 711-residue chain is Exotoxin translocation ATP-binding protein PaxB (711 aa).

A Peptidase C39 domain is found at 1 to 129 (MEPLMSFKQK…QVFQGNVILL (129 aa)). The next 5 membrane-spanning stretches (helical) occupy residues 157 to 177 (IFVE…ITPL), 195 to 215 (LNVI…LSGL), 273 to 293 (ALTS…MWYY), 299 to 319 (IVIL…SPIL), and 392 to 412 (VMII…LSIG). In terms of domain architecture, ABC transmembrane type-1 spans 158-440 (FVEVMIVSIF…LAQLWQDFQQ (283 aa)). Positions 472–707 (VTFKNIRFRY…KDGLYYYLNQ (236 aa)) constitute an ABC transporter domain. Residue 506 to 513 (GRSGSGKS) participates in ATP binding.

Belongs to the ABC transporter superfamily. Protein-1 exporter (TC 3.A.1.109) family. As to quaternary structure, homodimer.

The protein localises to the cell inner membrane. It catalyses the reaction ATP + H2O + proteinSide 1 = ADP + phosphate + proteinSide 2.. Functionally, part of the ABC transporter complex PaxBD involved in PaxA export. Transmembrane domains (TMD) form a pore in the inner membrane and the ATP-binding domain (NBD) is responsible for energy generation. This is Exotoxin translocation ATP-binding protein PaxB (paxB) from Pasteurella aerogenes.